The sequence spans 182 residues: MLNKSVARRYAEAFFSIARETGKVDELQQELEKLVSIIETTENLPEYFAHLLIPAKAKKEVANKLFGGQVSQLTLNFLNMIIDKRRETYIGLISEEYRDMADELRNITKAELTAAAPVSEADMKNLEQNLSAKTGKTVQLSLKVDPGLIGGLKIRIGDQIVDATVAKKLEMLKEQLKQAKIS.

The protein belongs to the ATPase delta chain family. F-type ATPases have 2 components, F(1) - the catalytic core - and F(0) - the membrane proton channel. F(1) has five subunits: alpha(3), beta(3), gamma(1), delta(1), epsilon(1). F(0) has three main subunits: a(1), b(2) and c(10-14). The alpha and beta chains form an alternating ring which encloses part of the gamma chain. F(1) is attached to F(0) by a central stalk formed by the gamma and epsilon chains, while a peripheral stalk is formed by the delta and b chains.

Its subcellular location is the cell membrane. F(1)F(0) ATP synthase produces ATP from ADP in the presence of a proton or sodium gradient. F-type ATPases consist of two structural domains, F(1) containing the extramembraneous catalytic core and F(0) containing the membrane proton channel, linked together by a central stalk and a peripheral stalk. During catalysis, ATP synthesis in the catalytic domain of F(1) is coupled via a rotary mechanism of the central stalk subunits to proton translocation. Functionally, this protein is part of the stalk that links CF(0) to CF(1). It either transmits conformational changes from CF(0) to CF(1) or is implicated in proton conduction. This is ATP synthase subunit delta from Syntrophomonas wolfei subsp. wolfei (strain DSM 2245B / Goettingen).